Here is a 309-residue protein sequence, read N- to C-terminus: Porphobilinogen deaminase (309 aa).

Cys-234 carries the S-(dipyrrolylmethanemethyl)cysteine modification.

Belongs to the HMBS family. Monomer. It depends on dipyrromethane as a cofactor.

The enzyme catalyses 4 porphobilinogen + H2O = hydroxymethylbilane + 4 NH4(+). The protein operates within porphyrin-containing compound metabolism; protoporphyrin-IX biosynthesis; coproporphyrinogen-III from 5-aminolevulinate: step 2/4. In terms of biological role, tetrapolymerization of the monopyrrole PBG into the hydroxymethylbilane pre-uroporphyrinogen in several discrete steps. This chain is Porphobilinogen deaminase (hemC), found in Mycobacterium bovis (strain ATCC BAA-935 / AF2122/97).